Consider the following 322-residue polypeptide: MARDKIALIGSGQIGGTLAHLIGLKELGDVVMFDIAEGVPQGKALDIAQSSPVDGFDAHYSGANSYEALDNAKVCIVTAGVPRKPGMSRDDLLSINLKVMEQVGAGIKKYAPDAFVICITNPLDAMVWALQKASGLPAKKVVGMAGVLDSARFRYFLADEFNVSVEDVTAFVLGGHGDTMVPLTKYSTVAGIPLPDLVKMGWTSQARIDEIVDRTRNGGAEIVNLLKTGSAYYAPAASAIAMAESYLRDKKRVLPCAAHLNGEFGVKDMYVGVPVVIGSKGVERIVEIELAGKDREAFDKSVAAVQGLVDACKKIAPDLLGR.

NAD(+)-binding positions include 10–15 (GSGQIG) and aspartate 34. Substrate-binding residues include arginine 83 and arginine 89. Residues asparagine 96 and 119 to 121 (ITN) each bind NAD(+). Substrate contacts are provided by asparagine 121 and arginine 152. The Proton acceptor role is filled by histidine 176.

This sequence belongs to the LDH/MDH superfamily. MDH type 3 family.

It catalyses the reaction (S)-malate + NAD(+) = oxaloacetate + NADH + H(+). In terms of biological role, catalyzes the reversible oxidation of malate to oxaloacetate. The sequence is that of Malate dehydrogenase from Bradyrhizobium sp. (strain BTAi1 / ATCC BAA-1182).